The following is a 349-amino-acid chain: Phosphoribosylformylglycinamidine cyclo-ligase (349 aa).

Belongs to the AIR synthase family.

It localises to the cytoplasm. The enzyme catalyses 2-formamido-N(1)-(5-O-phospho-beta-D-ribosyl)acetamidine + ATP = 5-amino-1-(5-phospho-beta-D-ribosyl)imidazole + ADP + phosphate + H(+). It participates in purine metabolism; IMP biosynthesis via de novo pathway; 5-amino-1-(5-phospho-D-ribosyl)imidazole from N(2)-formyl-N(1)-(5-phospho-D-ribosyl)glycinamide: step 2/2. The protein is Phosphoribosylformylglycinamidine cyclo-ligase of Albidiferax ferrireducens (strain ATCC BAA-621 / DSM 15236 / T118) (Rhodoferax ferrireducens).